The following is a 312-amino-acid chain: Large ribosomal subunit protein uL10 (312 aa).

A Glycyl lysine isopeptide (Lys-Gly) (interchain with G-Cter in ubiquitin) cross-link involves residue lysine 14. Position 68 is a phosphoserine (serine 68). Residues lysine 97 and lysine 144 each participate in a glycyl lysine isopeptide (Lys-Gly) (interchain with G-Cter in ubiquitin) cross-link. Residues 199-230 (SSILDITDEELVSHFVSAVSTIASISLAIGYP) form an interaction with P1A-P2B region. The interval 231-258 (TLPSVGHTLINNYKDLLAVAIAASYHYP) is interaction with P1B-P2A. Residues 278 to 293 (PAATSAASGDAAPAEE) show a composition bias toward low complexity. Residues 278 to 312 (PAATSAASGDAAPAEEAAAEEEEESDDDMGFGLFD) form a disordered region. Over residues 294-306 (AAAEEEEESDDDM) the composition is skewed to acidic residues. Position 302 is a phosphoserine; by CK2 (serine 302).

Belongs to the universal ribosomal protein uL10 family. As to quaternary structure, component of the large ribosomal subunit (LSU). Mature yeast ribosomes consist of a small (40S) and a large (60S) subunit. The 40S small subunit contains 1 molecule of ribosomal RNA (18S rRNA) and 33 different proteins (encoded by 57 genes). The large 60S subunit contains 3 rRNA molecules (25S, 5.8S and 5S rRNA) and 46 different proteins (encoded by 81 genes). The 5 acidic ribosomal P-proteins form the stalk structure of the 60S subunit. They are organized as a pentameric complex in which uL10/P0 interacts with 2 heterodimers, P1A-P2B and P1B-P2A. uL10 directly interacts with 28S rRNA. uL10 interacts with YFL034W.

The protein localises to the cytoplasm. Functionally, component of the ribosome, a large ribonucleoprotein complex responsible for the synthesis of proteins in the cell. The small ribosomal subunit (SSU) binds messenger RNAs (mRNAs) and translates the encoded message by selecting cognate aminoacyl-transfer RNA (tRNA) molecules. The large subunit (LSU) contains the ribosomal catalytic site termed the peptidyl transferase center (PTC), which catalyzes the formation of peptide bonds, thereby polymerizing the amino acids delivered by tRNAs into a polypeptide chain. The nascent polypeptides leave the ribosome through a tunnel in the LSU and interact with protein factors that function in enzymatic processing, targeting, and the membrane insertion of nascent chains at the exit of the ribosomal tunnel. uL10 forms part of the P stalk that participates in recruiting G proteins to the ribosome. The sequence is that of Large ribosomal subunit protein uL10 from Saccharomyces cerevisiae (strain ATCC 204508 / S288c) (Baker's yeast).